The primary structure comprises 199 residues: Lipid A acyltransferase PagP (199 aa).

The N-terminal stretch at 1–25 (MNYKDIINACILSGVFLLHSPSALA) is a signal peptide. Catalysis depends on residues His74, Asp117, and Ser118.

The protein belongs to the lipid A palmitoyltransferase family. In terms of assembly, homodimer.

It is found in the cell outer membrane. It catalyses the reaction a lipid A + a 1,2-diacyl-sn-glycero-3-phosphocholine = a hepta-acyl lipid A + a 2-acyl-sn-glycero-3-phosphocholine. The enzyme catalyses a lipid IVA + a 1,2-diacyl-sn-glycero-3-phosphocholine = a lipid IVB + a 2-acyl-sn-glycero-3-phosphocholine. It carries out the reaction a lipid IIA + a 1,2-diacyl-sn-glycero-3-phosphocholine = a lipid IIB + a 2-acyl-sn-glycero-3-phosphocholine. Functionally, transfers a fatty acid residue from the sn-1 position of a phospholipid to the N-linked hydroxyfatty acid chain on the proximal unit of lipid A or its precursors. The sequence is that of Lipid A acyltransferase PagP from Yersinia pestis bv. Antiqua (strain Antiqua).